Reading from the N-terminus, the 317-residue chain is Ferrochelatase (317 aa).

Fe cation is bound by residues His-184 and Glu-259.

Belongs to the ferrochelatase family.

The protein localises to the cytoplasm. It carries out the reaction heme b + 2 H(+) = protoporphyrin IX + Fe(2+). It functions in the pathway porphyrin-containing compound metabolism; protoheme biosynthesis; protoheme from protoporphyrin-IX: step 1/1. Catalyzes the ferrous insertion into protoporphyrin IX. This is Ferrochelatase from Chlamydia muridarum (strain MoPn / Nigg).